The primary structure comprises 276 residues: Elongation factor Ts (276 aa).

The involved in Mg(2+) ion dislocation from EF-Tu stretch occupies residues 80–83 (TDFV).

This sequence belongs to the EF-Ts family.

Its subcellular location is the cytoplasm. Its function is as follows. Associates with the EF-Tu.GDP complex and induces the exchange of GDP to GTP. It remains bound to the aminoacyl-tRNA.EF-Tu.GTP complex up to the GTP hydrolysis stage on the ribosome. The polypeptide is Elongation factor Ts (Acidothermus cellulolyticus (strain ATCC 43068 / DSM 8971 / 11B)).